The primary structure comprises 130 residues: MSTPRIALIAHDAKKDDIVALAGAYRATLAQCRLVATGTTGGRIAQAHGLDVERKLSGPLGGDLQIGAELADGRVDIVIFLRDPMTAQPHDPDITALVRACDVHDVPVATNVATARVLLDDLARRLTANA.

The 130-residue stretch at 1–130 folds into the MGS-like domain; that stretch reads MSTPRIALIA…DLARRLTANA (130 aa). Substrate is bound by residues H11, K15, 37–40, and 57–58; these read TGTT and SG. D63 serves as the catalytic Proton donor/acceptor. Position 90 (H90) interacts with substrate.

This sequence belongs to the methylglyoxal synthase family.

The catalysed reaction is dihydroxyacetone phosphate = methylglyoxal + phosphate. Functionally, catalyzes the formation of methylglyoxal from dihydroxyacetone phosphate. This Burkholderia mallei (strain NCTC 10247) protein is Methylglyoxal synthase.